We begin with the raw amino-acid sequence, 59 residues long: Large ribosomal subunit protein bL32 (59 aa).

The tract at residues 1-59 (MAVQQNKKSPSKRGMHRSHDHLSVAPLAVEPTTGETHLRHHVSPNGYYRGRKVIKTKND) is disordered. 2 stretches are compositionally biased toward basic residues: residues 9–19 (SPSKRGMHRSH) and 49–59 (RGRKVIKTKND).

The protein belongs to the bacterial ribosomal protein bL32 family.

The chain is Large ribosomal subunit protein bL32 from Cupriavidus metallidurans (strain ATCC 43123 / DSM 2839 / NBRC 102507 / CH34) (Ralstonia metallidurans).